A 227-amino-acid chain; its full sequence is Threonine--tRNA ligase (227 aa).

Residues 1–120 (DIELKLSTRP…LIEHYEGAFP (120 aa)) are catalytic.

This sequence belongs to the class-II aminoacyl-tRNA synthetase family. As to quaternary structure, homodimer.

It is found in the cytoplasm. It carries out the reaction tRNA(Thr) + L-threonine + ATP = L-threonyl-tRNA(Thr) + AMP + diphosphate + H(+). Functionally, catalyzes the attachment of threonine to tRNA(Thr) in a two-step reaction: L-threonine is first activated by ATP to form Thr-AMP and then transferred to the acceptor end of tRNA(Thr). Also edits incorrectly charged L-seryl-tRNA(Thr). This Pseudomonas syringae pv. syringae protein is Threonine--tRNA ligase.